The primary structure comprises 172 residues: C-phycocyanin beta chain (172 aa).

Residues Asn35, Asp39, Asn72, Arg77, Cys82, 82–88 (CLRDMEI), 149–151 (TTG), and Cys153 contribute to the (2R,3E)-phycocyanobilin site. N4-methylasparagine is present on Asn72.

The protein belongs to the phycobiliprotein family. In terms of assembly, heterodimer of an alpha and a beta subunit. Dimers further assemble into trimers and the trimers into hexamers. The basic functional unit of phycobiliproteins is a ring-shaped hexamer formed from two back-to-back trimers contacting via the alpha chain subunits. The trimers are composed of alpha/beta subunit heterodimers arranged around a three-fold axis of symmetry. The phycoerythrins also contain a gamma subunit which is located in the center of the hexamer. Post-translationally, contains two covalently linked phycocyanobilin chromophores.

Its subcellular location is the plastid. The protein resides in the chloroplast thylakoid membrane. Its function is as follows. Light-harvesting photosynthetic tetrapyrrole chromophore-protein from the phycobiliprotein complex (phycobilisome, PBS). Phycocyanin is the major phycobiliprotein in the PBS rod. This chain is C-phycocyanin beta chain (cpcB), found in Galdieria sulphuraria (Red alga).